Reading from the N-terminus, the 211-residue chain is Ribosomal RNA small subunit methyltransferase G (211 aa).

Residues glycine 73, phenylalanine 78, 124 to 125, and arginine 137 contribute to the S-adenosyl-L-methionine site; that span reads VE.

The protein belongs to the methyltransferase superfamily. RNA methyltransferase RsmG family.

The protein resides in the cytoplasm. In terms of biological role, specifically methylates the N7 position of a guanine in 16S rRNA. This is Ribosomal RNA small subunit methyltransferase G from Christiangramia forsetii (strain DSM 17595 / CGMCC 1.15422 / KT0803) (Gramella forsetii).